The primary structure comprises 511 residues: Inositol-3-phosphate synthase (511 aa).

NAD(+) is bound by residues glycine 70, asparagine 71, asparagine 72, aspartate 143, serine 179, isoleucine 180, glutamine 190, arginine 193, serine 230, alanine 231, asparagine 232, threonine 233, glycine 281, serine 282, aspartate 306, threonine 309, asparagine 340, asparagine 341, aspartate 342, lysine 355, glycine 393, aspartate 394, aspartate 422, and serine 423.

It belongs to the myo-inositol 1-phosphate synthase family. NAD(+) is required as a cofactor.

It is found in the cytoplasm. The enzyme catalyses D-glucose 6-phosphate = 1D-myo-inositol 3-phosphate. It participates in polyol metabolism; myo-inositol biosynthesis; myo-inositol from D-glucose 6-phosphate: step 1/2. Its function is as follows. Key enzyme in myo-inositol biosynthesis pathway that catalyzes the conversion of glucose 6-phosphate to 1-myo-inositol 1-phosphate in a NAD-dependent manner. Rate-limiting enzyme in the synthesis of all inositol-containing compounds. The protein is Inositol-3-phosphate synthase (ino1) of Dictyostelium discoideum (Social amoeba).